The following is a 161-amino-acid chain: Cap-associated protein CAF20 (161 aa).

Residues 52–72 (HFGRRRSSHHHGRPKIKHNKP) are compositionally biased toward basic residues. The disordered stretch occupies residues 52–108 (HFGRRRSSHHHGRPKIKHNKPKVTTDSDGWCTFEAKKKGSGEDDEEETETTPTSTVP). A phosphoserine mark is found at serine 78 and serine 91. Phosphothreonine occurs at positions 99, 101, and 102. Serine 154 carries the phosphoserine modification.

The protein belongs to the CAF20 family. As to quaternary structure, interacts with TIF45. In terms of processing, phosphorylated by casein kinase II complex (CK2).

The protein resides in the cytoplasm. Its function is as follows. Acts as an inhibitor of cap-dependent translation. Competes with eIF4G1/TIF4631 and EAP1 for binding to eIF4E/TIF45 and interferes with the formation of the eIF4F complex, inhibiting translation and stabilizing mRNA. Binding affinity for eIF4E/TIF45 is 10-fold less than that of eIF4G1/TIF4631. Required for induction of pseudohyphal growth in response to nitrogen limitation, probably by regulating STE12 translation. The protein is Cap-associated protein CAF20 (CAF20) of Saccharomyces cerevisiae (strain ATCC 204508 / S288c) (Baker's yeast).